Here is a 755-residue protein sequence, read N- to C-terminus: Photosystem I P700 chlorophyll a apoprotein A1 (755 aa).

Helical transmembrane passes span 72–95, 158–181, 197–221, 297–315, 352–375, 391–417, 439–461, and 536–554; these read IFSA…FHGA, LYCT…FHYH, LNHH…HVSL, TAHH…GHMY, WHAQ…QHMY, LSLF…IFMV, AIIS…LYVH, and FMVH…LILL. [4Fe-4S] cluster-binding residues include cysteine 578 and cysteine 587. The next 2 membrane-spanning stretches (helical) occupy residues 594–615 and 669–691; these read HVFL…HFSW and LSAY…MFLF. Position 680 (histidine 680) interacts with chlorophyll a'. Chlorophyll a-binding residues include methionine 688 and tyrosine 696. A phylloquinone-binding site is contributed by tryptophan 697. The helical transmembrane segment at 729 to 749 threads the bilayer; sequence AVGVAHYLLGGIATTWAFFLA.

The protein belongs to the PsaA/PsaB family. The PsaA/B heterodimer binds the P700 chlorophyll special pair and subsequent electron acceptors. PSI consists of a core antenna complex that captures photons, and an electron transfer chain that converts photonic excitation into a charge separation. The cyanobacterial PSI reaction center is composed of one copy each of PsaA,B,C,D,E,F,I,J,K,L,M and X, and forms trimeric complexes. It depends on PSI electron transfer chain: 5 chlorophyll a, 1 chlorophyll a', 2 phylloquinones and 3 4Fe-4S clusters. PSI core antenna: 90 chlorophyll a, 22 carotenoids, 3 phospholipids and 1 galactolipid. P700 is a chlorophyll a/chlorophyll a' dimer, A0 is one or more chlorophyll a, A1 is one or both phylloquinones and FX is a shared 4Fe-4S iron-sulfur center. as a cofactor.

The protein resides in the cellular thylakoid membrane. It carries out the reaction reduced [plastocyanin] + hnu + oxidized [2Fe-2S]-[ferredoxin] = oxidized [plastocyanin] + reduced [2Fe-2S]-[ferredoxin]. In terms of biological role, psaA and PsaB bind P700, the primary electron donor of photosystem I (PSI), as well as the electron acceptors A0, A1 and FX. PSI is a plastocyanin/cytochrome c6-ferredoxin oxidoreductase, converting photonic excitation into a charge separation, which transfers an electron from the donor P700 chlorophyll pair to the spectroscopically characterized acceptors A0, A1, FX, FA and FB in turn. Oxidized P700 is reduced on the lumenal side of the thylakoid membrane by plastocyanin or cytochrome c6. The chain is Photosystem I P700 chlorophyll a apoprotein A1 from Thermostichus vulcanus (Synechococcus vulcanus).